Here is a 286-residue protein sequence, read N- to C-terminus: Tryptophan 2,3-dioxygenase (286 aa).

Substrate is bound by residues 53–57, Tyr115, and Arg119; that span reads FIVQH. His242 provides a ligand contact to heme. Thr256 lines the substrate pocket.

This sequence belongs to the tryptophan 2,3-dioxygenase family. In terms of assembly, homotetramer. It depends on heme as a cofactor.

The enzyme catalyses L-tryptophan + O2 = N-formyl-L-kynurenine. It functions in the pathway amino-acid degradation; L-tryptophan degradation via kynurenine pathway; L-kynurenine from L-tryptophan: step 1/2. In terms of biological role, heme-dependent dioxygenase that catalyzes the oxidative cleavage of the L-tryptophan (L-Trp) pyrrole ring and converts L-tryptophan to N-formyl-L-kynurenine. Catalyzes the oxidative cleavage of the indole moiety. The polypeptide is Tryptophan 2,3-dioxygenase (Kineococcus radiotolerans (strain ATCC BAA-149 / DSM 14245 / SRS30216)).